A 380-amino-acid polypeptide reads, in one-letter code: Putative F-box/kelch-repeat protein At2g44030 (380 aa).

Residues 16-66 (PKSFLSLPYDVVFNCLSRVSRTHDPILSLVSKSFRSLLALPDLEAERFRIL) form the F-box domain. Kelch repeat units follow at residues 123–170 (EIYL…VIDG) and 172–219 (INVY…ALIK).

This is Putative F-box/kelch-repeat protein At2g44030 from Arabidopsis thaliana (Mouse-ear cress).